The following is a 152-amino-acid chain: Transcriptional regulator MraZ (152 aa).

SpoVT-AbrB domains are found at residues 5–52 (LNPI…THPQ) and 81–124 (ATEV…GKSQ).

This sequence belongs to the MraZ family. In terms of assembly, forms oligomers.

The protein localises to the cytoplasm. Its subcellular location is the nucleoid. This chain is Transcriptional regulator MraZ, found in Coxiella burnetii (strain Dugway 5J108-111).